A 1762-amino-acid chain; its full sequence is ADAMTS-like protein 1 (1762 aa).

An N-terminal signal peptide occupies residues 1-28; that stretch reads MECCRRATPGTLLLFLAFLLLSSRTARS. A TSP type-1 1 domain is found at 33–82; it reads DGLWDAWGPWSECSRTCGGGASYSLRRCLSSKSCEGRNIRYRTCSNVDCP. C-linked (Man) tryptophan glycosylation is found at Trp-39 and Trp-42. 3 disulfides stabilise this stretch: Cys-45–Cys-76, Cys-49–Cys-81, and Cys-60–Cys-66. An O-linked (Fuc...) threonine glycan is attached at Thr-48. N-linked (GlcNAc...) asparagine glycosylation occurs at Asn-251. An O-linked (Fuc...) threonine glycan is attached at Thr-312. TSP type-1 domains follow at residues 376 to 424, 436 to 493, 522 to 584, 607 to 665, 666 to 729, and 788 to 850; these read PLPR…MYTP, DCPK…TPCY, EEPS…GPCS, ELYD…NLDP, CPAR…FNCP, and CPSE…ATCA. The O-linked (Fuc...) serine glycan is linked to Ser-391. O-linked (Fuc...) threonine glycosylation is present at Thr-451. Intrachain disulfides connect Cys-534-Cys-578, Cys-538-Cys-583, and Cys-549-Cys-567. Intrachain disulfides connect Cys-678/Cys-723, Cys-682/Cys-728, Cys-693/Cys-712, Cys-800/Cys-844, Cys-804/Cys-849, Cys-815/Cys-832, and Cys-899/Cys-947. Positions 861 to 963 constitute an Ig-like C2-type 1 domain; the sequence is PHIAAARKVY…EHFVIKLIGG (103 aa). The segment at 1120-1164 is disordered; it reads LKPSERRTSPVTLSPHKHVSGFSSSLRTSSTGDAGGGSRRPHRKP. A compositionally biased stretch (low complexity) spans 1139–1151; it reads SGFSSSLRTSSTG. Ig-like C2-type domains follow at residues 1164 to 1266, 1286 to 1369, and 1395 to 1485; these read PTIL…IAVT, PAVT…TQLL, and PSVL…ASLV. Intrachain disulfides connect Cys-1202–Cys-1250, Cys-1308–Cys-1353, and Cys-1418–Cys-1469. TSP type-1 domains follow at residues 1545 to 1608 and 1666 to 1726; these read CPSR…QLCV and CSVH…TPCE. Positions 1726-1762 constitute a PLAC domain; the sequence is ENMECRDTTRYCEKVKQLKLCQLSQFKSRCCGTCGKA.

Monomer. In terms of processing, C-, N- and O-glycosylated. O-fucosylated by POFUT2 on a serine or a threonine residue found within the consensus sequence C1-X(2)-(S/T)-C2-G of the TSP type-1 repeat domains where C1 and C2 are the first and second cysteine residue of the repeat, respectively. Fucosylated repeats can then be further glycosylated by the addition of a beta-1,3-glucose residue by the glucosyltransferase, B3GALTL. Fucosylation mediates the efficient secretion of ADAMTSL1. Can also be C-glycosylated with one or two mannose molecules on tryptophan residues within the consensus sequence W-X-X-W of the TPRs, and N-glycosylated. These other glycosylations can also facilitate secretion. Post-translationally, disulfide bonds are present. As to expression, expressed primarily in adult skeletal muscle.

The protein localises to the secreted. Its subcellular location is the extracellular space. It is found in the extracellular matrix. This is ADAMTS-like protein 1 (ADAMTSL1) from Homo sapiens (Human).